The primary structure comprises 194 residues: ATP-dependent Clp protease proteolytic subunit (194 aa).

The active-site Nucleophile is Ser98. The active site involves His123.

It belongs to the peptidase S14 family. In terms of assembly, fourteen ClpP subunits assemble into 2 heptameric rings which stack back to back to give a disk-like structure with a central cavity, resembling the structure of eukaryotic proteasomes.

Its subcellular location is the cytoplasm. It carries out the reaction Hydrolysis of proteins to small peptides in the presence of ATP and magnesium. alpha-casein is the usual test substrate. In the absence of ATP, only oligopeptides shorter than five residues are hydrolyzed (such as succinyl-Leu-Tyr-|-NHMec, and Leu-Tyr-Leu-|-Tyr-Trp, in which cleavage of the -Tyr-|-Leu- and -Tyr-|-Trp bonds also occurs).. In terms of biological role, cleaves peptides in various proteins in a process that requires ATP hydrolysis. Has a chymotrypsin-like activity. Plays a major role in the degradation of misfolded proteins. This is ATP-dependent Clp protease proteolytic subunit from Clostridium botulinum (strain Loch Maree / Type A3).